The chain runs to 149 residues: Large-conductance mechanosensitive channel (149 aa).

3 consecutive transmembrane segments (helical) span residues 16–36 (VMDLAVGVIIGGAFSTIVNSV), 40–60 (LIMPVVGVATGGLDFSNKFIL), and 89–109 (GSFITVAINFVILALIIFMMV).

It belongs to the MscL family. As to quaternary structure, homopentamer.

It localises to the cell inner membrane. Functionally, channel that opens in response to stretch forces in the membrane lipid bilayer. May participate in the regulation of osmotic pressure changes within the cell. This is Large-conductance mechanosensitive channel from Paraburkholderia phymatum (strain DSM 17167 / CIP 108236 / LMG 21445 / STM815) (Burkholderia phymatum).